We begin with the raw amino-acid sequence, 86 residues long: Mu-theraphotoxin-Hhn1d (86 aa).

The N-terminal stretch at 1–21 (MKASMFLALAGLALLFVVCYA) is a signal peptide. The propeptide occupies 22-49 (SESEEKEFSNELLSSVLAVDDNSKGEER). 3 disulfide bridges follow: Cys51–Cys66, Cys58–Cys73, and Cys65–Cys80. At Ile84 the chain carries Isoleucine amide.

This sequence belongs to the neurotoxin 10 (Hwtx-1) family. 22 (Htx-4) subfamily. As to quaternary structure, monomer. As to expression, expressed by the venom gland.

It localises to the secreted. Neurotoxin. Selectively blocks neuronal tetrodotoxin-sensitive voltage-gated sodium channels (Nav). Does not affect tetrodotoxin-resistant voltage-gated sodium channels or calcium channels. The polypeptide is Mu-theraphotoxin-Hhn1d (Cyriopagopus hainanus (Chinese bird spider)).